Reading from the N-terminus, the 876-residue chain is Leucine--tRNA ligase (876 aa).

Residues P42–H52 carry the 'HIGH' region motif. Positions K634–S638 match the 'KMSKS' region motif. K637 provides a ligand contact to ATP.

Belongs to the class-I aminoacyl-tRNA synthetase family.

It is found in the cytoplasm. It catalyses the reaction tRNA(Leu) + L-leucine + ATP = L-leucyl-tRNA(Leu) + AMP + diphosphate. This chain is Leucine--tRNA ligase, found in Neisseria gonorrhoeae (strain NCCP11945).